Here is a 400-residue protein sequence, read N- to C-terminus: Protein phyllopod (400 aa).

Residues 109-127 (QERTKLRPVAMVRPTVRVQ) form an interaction with sina region. Residues 125–145 (RVQPQSQPQLQPQVPINPTPA) are disordered. Residues 127–138 (QPQSQPQLQPQV) show a composition bias toward low complexity. The tract at residues 241-320 (YQRFPQPSVD…TAISEVLPTA (80 aa)) is interaction with ttk. Residues 319-362 (TARYQVTHEENKENQQAQEMELELEEEEEVDGRAELEVVQEAEA) are a coiled coil. The disordered stretch occupies residues 346-382 (EEVDGRAELEVVQEAEAPLEPQSHHKQGNSHQNSHQA).

As to quaternary structure, component of some E3 complex at least composed of sina, ebi and phyl, required for the degradation of ttk. In embryos, it is ubiquitously present before cellularization. During stages 9-11, it is expressed in neuroblasts and the SOP cells. From stage 12 onward, it decreases, but remains in a subset of PNS cells at stages 12-14. Weakly expressed in wing imaginal disks, in the SOP cells of wing margin bristles, notal macrochaetes, and other sensory organs. In leg disks, it is expressed in the precursors of the femoral chordotonal organs, as well as in external sensory SOP cells. Strongly expressed in the eye-antenna disk, it is specifically expressed in R1, R6 and R7 cells, and not in R3, R3, R4, R5 and R8 cells.

It localises to the nucleus. Essential adapter component of E3 ubiquitin ligase complexes; involved in R7 photoreceptor cell differentiation, embryonic nervous system, external sensory organ development and specification of particular muscles. E3 ubiquitin ligase complexes mediate ubiquitination and subsequent proteasomal degradation of target proteins. Required for specification of R7 photoreceptor cell fate in the eye by participating in the ubiquitination and subsequent proteasomal degradation of Tramtrack (ttk), a general inhibitor of photoreceptor differentiation. Acts downstream of Notch signaling to specify the fate of the SOP (sensory organ precursor) cells and their progeny, probably via the sina-mediated proteasomal degradation of ttk. Its restricted pattern of expression, upon Notch and Ras signaling pathways, suggests that it acts as a key determinant in E3 complexes to trigger protein proteolysis in appropriate cells. This is Protein phyllopod (phyl) from Drosophila melanogaster (Fruit fly).